The following is a 537-amino-acid chain: Leucine-rich repeat LGI family member 4 (537 aa).

Residues 1–19 (MGGAGILLLLLAGAGVVVA) form the signal peptide. LRR repeat units lie at residues 53-74 (TLLSLSLVRTGVTQLKAGSFLR), 77-98 (SLHLLLFTSNSFSVIEDDAFAG), 101-122 (HLQYLFIEDNEIGSISKNALRG), and 125-146 (SLTHLSLANNHLETLPRFLFRG). One can recognise an LRRCT domain in the interval 158–208 (NPFQCDCRVLWLLQWMPTVNASVGTGACAGPASLSHMQLHHLDPKTFKCRA). Asn177 is a glycosylation site (N-linked (GlcNAc...) asparagine). EAR repeat units follow at residues 210–252 (ELSW…SWDY), 256–298 (RFRP…ARPS), 302–349 (RLAP…CRDG), 351–394 (GFYP…HWTG), 396–439 (RFER…RWDG), 441–483 (MFRL…RLEP), and 487–532 (LLEP…QHHE).

Can bind to ADAM11, ADAM22 and ADAM23. In terms of tissue distribution, widely expressed, with highest expression in brain.

It localises to the secreted. Its function is as follows. Component of Schwann cell signaling pathway(s) that controls axon segregation and myelin formation. In Homo sapiens (Human), this protein is Leucine-rich repeat LGI family member 4 (LGI4).